We begin with the raw amino-acid sequence, 1083 residues long: Histone-lysine N-methyltransferase ATX2 (1083 aa).

A Nuclear localization signal motif is present at residues 77–84 (HRRPEIVH). Positions 315-379 (PRDIIWAKLT…VKQAVSFLKG (65 aa)) constitute a PWWP domain. The tract at residues 422–443 (TDCSERINSGEEDSSNSGDDYT) is disordered. One can recognise an FYR N-terminal domain in the interval 457-516 (DCLHRIGDLQIINLGRIVTDSEFFKDSKHTWPEGYTATRKFISLKDPNASAMYKMEVLRD). Residues 520 to 604 (KTRPVFRVTT…PPSKVSQRKY (85 aa)) form the FYR C-terminal domain. The PHD-type 1 zinc finger occupies 626–677 (LDKCNVCHMDEEYENNLFLQCDKCRMMVHTRCYGQLEPHNGILWLCNLCRPV). The C2HC pre-PHD-type zinc finger occupies 682-715 (PPRCCLCPVVGGAMKPTTDGRWAHLACAIWIPET). Residues 682–807 (PPRCCLCPVV…RLLSFCKRHR (126 aa)) form an extended PHD domain (ePHD) region. The PHD-type 2 zinc finger occupies 739 to 807 (LLCSICGVSY…RLLSFCKRHR (69 aa)). The 119-residue stretch at 919 to 1037 (KRLAFGKSGI…KWEELTYDYR (119 aa)) folds into the SET domain. An S-adenosyl-L-methionine-binding site is contributed by histidine 929. Serine 968 is a glycosylation site (O-linked (GlcNAc) serine). Residues tyrosine 975 and 998-999 (NH) each bind S-adenosyl-L-methionine. Cysteine 1001 provides a ligand contact to Zn(2+). An S-adenosyl-L-methionine-binding site is contributed by tyrosine 1036. Residues 1043-1059 (ERLACYCGFPRCRGVVN) form the Post-SET domain. Zn(2+) contacts are provided by cysteine 1047, cysteine 1049, and cysteine 1054.

Belongs to the class V-like SAM-binding methyltransferase superfamily. Histone-lysine methyltransferase family. TRX/MLL subfamily. Activated via O-glycosylation. As to expression, expressed in roots, leaves and flowers and, to a lower extent, in young seedlings.

The protein resides in the nucleus. The enzyme catalyses N(6)-methyl-L-lysyl-[histone] + S-adenosyl-L-methionine = N(6),N(6)-dimethyl-L-lysyl-[histone] + S-adenosyl-L-homocysteine + H(+). Histone methyltransferase. Dimethylates 'Lys-4' of histone H3 (H3K4me2). H3 'Lys-4' methylation represents a specific tag for epigenetic transcriptional activation. Methylates only a limited fraction of nucleosomes of target genes (e.g. NAP and XTH33). Involved in epigenetic regulation of the floral repressor FLC and FT to prevent the transition from vegetative to reproductive development. In Arabidopsis thaliana (Mouse-ear cress), this protein is Histone-lysine N-methyltransferase ATX2.